A 515-amino-acid polypeptide reads, in one-letter code: Bifunctional purine biosynthesis protein PurH (515 aa).

Residues Met1–Val145 form the MGS-like domain.

It belongs to the PurH family.

The enzyme catalyses (6R)-10-formyltetrahydrofolate + 5-amino-1-(5-phospho-beta-D-ribosyl)imidazole-4-carboxamide = 5-formamido-1-(5-phospho-D-ribosyl)imidazole-4-carboxamide + (6S)-5,6,7,8-tetrahydrofolate. The catalysed reaction is IMP + H2O = 5-formamido-1-(5-phospho-D-ribosyl)imidazole-4-carboxamide. It participates in purine metabolism; IMP biosynthesis via de novo pathway; 5-formamido-1-(5-phospho-D-ribosyl)imidazole-4-carboxamide from 5-amino-1-(5-phospho-D-ribosyl)imidazole-4-carboxamide (10-formyl THF route): step 1/1. The protein operates within purine metabolism; IMP biosynthesis via de novo pathway; IMP from 5-formamido-1-(5-phospho-D-ribosyl)imidazole-4-carboxamide: step 1/1. The chain is Bifunctional purine biosynthesis protein PurH from Streptococcus equi subsp. equi (strain 4047).